A 251-amino-acid polypeptide reads, in one-letter code: UPF0246 protein TM1040_2658 (251 aa).

This sequence belongs to the UPF0246 family.

In Ruegeria sp. (strain TM1040) (Silicibacter sp.), this protein is UPF0246 protein TM1040_2658.